Here is a 435-residue protein sequence, read N- to C-terminus: Serine--tRNA ligase (435 aa).

The interval 41 to 70 is disordered; sequence QVKTEELQAQRNSRSKSIGQAKAKGDHEEA. Over residues 49-58 the composition is skewed to polar residues; it reads AQRNSRSKSI. Residue 242–244 coordinates L-serine; that stretch reads TAE. 273–275 contributes to the ATP binding site; that stretch reads RSE. Glu296 is an L-serine binding site. An ATP-binding site is contributed by 360-363; that stretch reads EISS. Residue Ser396 participates in L-serine binding.

The protein belongs to the class-II aminoacyl-tRNA synthetase family. Type-1 seryl-tRNA synthetase subfamily. In terms of assembly, homodimer. The tRNA molecule binds across the dimer.

It localises to the cytoplasm. The catalysed reaction is tRNA(Ser) + L-serine + ATP = L-seryl-tRNA(Ser) + AMP + diphosphate + H(+). The enzyme catalyses tRNA(Sec) + L-serine + ATP = L-seryl-tRNA(Sec) + AMP + diphosphate + H(+). The protein operates within aminoacyl-tRNA biosynthesis; selenocysteinyl-tRNA(Sec) biosynthesis; L-seryl-tRNA(Sec) from L-serine and tRNA(Sec): step 1/1. Catalyzes the attachment of serine to tRNA(Ser). Is also able to aminoacylate tRNA(Sec) with serine, to form the misacylated tRNA L-seryl-tRNA(Sec), which will be further converted into selenocysteinyl-tRNA(Sec). This chain is Serine--tRNA ligase, found in Aliivibrio fischeri (strain ATCC 700601 / ES114) (Vibrio fischeri).